The following is a 652-amino-acid chain: p-hydroxybenzoic acid efflux pump subunit AaeB (652 aa).

A run of 11 helical transmembrane segments spans residues 8-28 (FPIKLTFAIVLSLLIGFHFNL), 34-54 (AVMTACIVAGGTAFAAGGDPF), 64-84 (LRIIGTFLGCIAALTIMIATI), 88-108 (ALMMLLCCMWAGLCVWLSSLI), 118-138 (LAGYTALIIVVSVDANGSVLL), 149-169 (EIIIGIVCAILADMLFSPRSV), 367-387 (LFWLWTGWASGSGAMVMLAVI), 404-424 (FLYGMIVAIPLGSLYYMVIMP), 429-449 (SMLLLCISLGVMAFIGGILIQ), 453-473 (IGTLGGLVGTINIITLDNPMT), and 480-500 (LDNALGQAIGCFLALLVILLI).

The protein belongs to the aromatic acid exporter ArAE (TC 2.A.85) family.

Its subcellular location is the cell inner membrane. Forms an efflux pump with AaeA. Could function as a metabolic relief valve, allowing to eliminate certain compounds when they accumulate to high levels in the cell. This is p-hydroxybenzoic acid efflux pump subunit AaeB from Erwinia billingiae (strain Eb661).